Reading from the N-terminus, the 299-residue chain is Protein sprouty homolog 4 (299 aa).

N-acetylmethionine is present on Met1. 2 disordered regions span residues 55–79 (NPSL…PTPA) and 92–126 (FSGR…QASP). Over residues 92 to 107 (FSGRPSSVSSSSSTSS) the composition is skewed to low complexity. Phosphoserine is present on Ser125. The SPR domain maps to 166–273 (KCKECASPRT…GYDRLRRPGC (108 aa)). A required for interaction with TESK1. Required for colocalization with TESK1 at vesicular spots in the cytoplasm and inhibition of TESK1 kinase activity, resulting in inhibition of cell spreading region spans residues 181 to 299 (VCNQECLCSA…AKTSRPDKPF (119 aa)).

The protein belongs to the sprouty family. Interacts (via C-terminus) with TESK1 (via both C- and N-termini); the interaction inhibits TESK1 kinase activity. Interacts with RAF1. Interacts with CAV1 (via C-terminus).

Its subcellular location is the cytoplasm. It is found in the cell projection. The protein resides in the ruffle membrane. In terms of biological role, suppresses the insulin receptor and EGFR-transduced MAPK signaling pathway, but does not inhibit MAPK activation by a constitutively active mutant Ras. Probably impairs the formation of GTP-Ras. Inhibits Ras-independent, but not Ras-dependent, activation of RAF1. Represses integrin-mediated cell spreading via inhibition of TESK1-mediated phosphorylation of cofilin. This Homo sapiens (Human) protein is Protein sprouty homolog 4 (SPRY4).